We begin with the raw amino-acid sequence, 156 residues long: Small ribosomal subunit protein uS7 (156 aa).

Belongs to the universal ribosomal protein uS7 family. Part of the 30S ribosomal subunit. Contacts proteins S9 and S11.

In terms of biological role, one of the primary rRNA binding proteins, it binds directly to 16S rRNA where it nucleates assembly of the head domain of the 30S subunit. Is located at the subunit interface close to the decoding center, probably blocks exit of the E-site tRNA. The sequence is that of Small ribosomal subunit protein uS7 from Cutibacterium acnes (strain DSM 16379 / KPA171202) (Propionibacterium acnes).